We begin with the raw amino-acid sequence, 128 residues long: Light-regulated protein, chloroplastic (128 aa).

2 consecutive repeat copies span residues 58-72 (VFPMEACDLIGGEAC) and 111-125 (VFPEEACDDLGGEFC). Residues 58 to 125 (VFPMEACDLI…ACDDLGGEFC (68 aa)) form a 2 X 15 AA approximate repeats region.

In terms of assembly, component of high molecular weight thylakoid LFNRs-containing protein complexes containing LIR1, LFNR1, LFNR2, TIC62 and TROL proteins. Interacts directly with LFNR1 and LFNR2; LIR1 increases the affinity of LFNR1 and LFNR2 for TIC62 and subsequent thylakoid relocalization. May form interchain disulfide bonds with LFNR1 and LFNR2.

It is found in the plastid. It localises to the chloroplast thylakoid membrane. Its subcellular location is the chloroplast envelope. The protein resides in the chloroplast stroma. Its function is as follows. Thylakoid-determinant subunit of high molecular weight LFNRs-containing protein complexes. The sequence is that of Light-regulated protein, chloroplastic (LIR1) from Oryza sativa subsp. japonica (Rice).